A 602-amino-acid chain; its full sequence is Elongation factor 4 (602 aa).

Positions 7–189 (KRVRNFSIIA…AVVEKVPYPK (183 aa)) constitute a tr-type G domain. GTP contacts are provided by residues 19 to 24 (DHGKST) and 136 to 139 (NKID).

It belongs to the TRAFAC class translation factor GTPase superfamily. Classic translation factor GTPase family. LepA subfamily.

Its subcellular location is the cell membrane. The enzyme catalyses GTP + H2O = GDP + phosphate + H(+). Functionally, required for accurate and efficient protein synthesis under certain stress conditions. May act as a fidelity factor of the translation reaction, by catalyzing a one-codon backward translocation of tRNAs on improperly translocated ribosomes. Back-translocation proceeds from a post-translocation (POST) complex to a pre-translocation (PRE) complex, thus giving elongation factor G a second chance to translocate the tRNAs correctly. Binds to ribosomes in a GTP-dependent manner. This is Elongation factor 4 from Clostridium tetani (strain Massachusetts / E88).